Consider the following 515-residue polypeptide: Maturase K (515 aa).

This sequence belongs to the intron maturase 2 family. MatK subfamily.

It is found in the plastid. The protein resides in the chloroplast. Functionally, usually encoded in the trnK tRNA gene intron. Probably assists in splicing its own and other chloroplast group II introns. The chain is Maturase K from Pinus elliottii (Slash pine).